The sequence spans 66 residues: Large ribosomal subunit protein bL28 (66 aa).

Residues Met1–Arg26 are disordered. Polar residues predominate over residues Phe13–Arg25.

This sequence belongs to the bacterial ribosomal protein bL28 family.

The protein is Large ribosomal subunit protein bL28 of Leuconostoc mesenteroides subsp. mesenteroides (strain ATCC 8293 / DSM 20343 / BCRC 11652 / CCM 1803 / JCM 6124 / NCDO 523 / NBRC 100496 / NCIMB 8023 / NCTC 12954 / NRRL B-1118 / 37Y).